The sequence spans 235 residues: Phosphoribosylaminoimidazole-succinocarboxamide synthase (235 aa).

This sequence belongs to the SAICAR synthetase family.

It carries out the reaction 5-amino-1-(5-phospho-D-ribosyl)imidazole-4-carboxylate + L-aspartate + ATP = (2S)-2-[5-amino-1-(5-phospho-beta-D-ribosyl)imidazole-4-carboxamido]succinate + ADP + phosphate + 2 H(+). It participates in purine metabolism; IMP biosynthesis via de novo pathway; 5-amino-1-(5-phospho-D-ribosyl)imidazole-4-carboxamide from 5-amino-1-(5-phospho-D-ribosyl)imidazole-4-carboxylate: step 1/2. This is Phosphoribosylaminoimidazole-succinocarboxamide synthase from Streptococcus pneumoniae (strain 70585).